A 383-amino-acid chain; its full sequence is E3 ubiquitin-protein ligase Os04g0590900 (383 aa).

A helical membrane pass occupies residues 53–73; the sequence is PVFSPLVIAIIGVLASAFLLV. The segment at 105–129 is disordered; sequence GGAGSGGRHGHGQSRSHESWNVSPP. An RING-type; atypical zinc finger spans residues 157-199; it reads CSVCLGEFSDGESLRLLPRCSHAFHQQCIDTWLKSHSNCPLCR. Disordered stretches follow at residues 269–291 and 320–383; these read EANG…SSFD and LLAG…DHPM.

Its subcellular location is the membrane. The catalysed reaction is S-ubiquitinyl-[E2 ubiquitin-conjugating enzyme]-L-cysteine + [acceptor protein]-L-lysine = [E2 ubiquitin-conjugating enzyme]-L-cysteine + N(6)-ubiquitinyl-[acceptor protein]-L-lysine.. The protein operates within protein modification; protein ubiquitination. Possesses E3 ubiquitin-protein ligase in vitro. The protein is E3 ubiquitin-protein ligase Os04g0590900 of Oryza sativa subsp. japonica (Rice).